The sequence spans 254 residues: Triosephosphate isomerase (254 aa).

12 to 14 is a substrate binding site; the sequence is NWK. The active-site Electrophile is His99. Glu169 acts as the Proton acceptor in catalysis. Substrate contacts are provided by residues Gly175, Ser214, and 235–236; that span reads GG.

Belongs to the triosephosphate isomerase family. In terms of assembly, homodimer.

It is found in the cytoplasm. The catalysed reaction is D-glyceraldehyde 3-phosphate = dihydroxyacetone phosphate. Its pathway is carbohydrate biosynthesis; gluconeogenesis. It participates in carbohydrate degradation; glycolysis; D-glyceraldehyde 3-phosphate from glycerone phosphate: step 1/1. Involved in the gluconeogenesis. Catalyzes stereospecifically the conversion of dihydroxyacetone phosphate (DHAP) to D-glyceraldehyde-3-phosphate (G3P). The protein is Triosephosphate isomerase of Bartonella quintana (strain Toulouse) (Rochalimaea quintana).